A 385-amino-acid polypeptide reads, in one-letter code: Succinyl-diaminopimelate desuccinylase (385 aa).

H78 is a Zn(2+) binding site. Residue D80 is part of the active site. D110 contacts Zn(2+). Catalysis depends on E144, which acts as the Proton acceptor. Residues E145, E173, and H358 each contribute to the Zn(2+) site.

This sequence belongs to the peptidase M20A family. DapE subfamily. Homodimer. It depends on Zn(2+) as a cofactor. Requires Co(2+) as cofactor.

The catalysed reaction is N-succinyl-(2S,6S)-2,6-diaminopimelate + H2O = (2S,6S)-2,6-diaminopimelate + succinate. Its pathway is amino-acid biosynthesis; L-lysine biosynthesis via DAP pathway; LL-2,6-diaminopimelate from (S)-tetrahydrodipicolinate (succinylase route): step 3/3. In terms of biological role, catalyzes the hydrolysis of N-succinyl-L,L-diaminopimelic acid (SDAP), forming succinate and LL-2,6-diaminopimelate (DAP), an intermediate involved in the bacterial biosynthesis of lysine and meso-diaminopimelic acid, an essential component of bacterial cell walls. The chain is Succinyl-diaminopimelate desuccinylase from Gluconacetobacter diazotrophicus (strain ATCC 49037 / DSM 5601 / CCUG 37298 / CIP 103539 / LMG 7603 / PAl5).